Here is a 455-residue protein sequence, read N- to C-terminus: MSFLIDSSIMVTSQVLFFGFGWLFFMRKLFKDYEVRQYVVQVIFSVTFAFSCTMFELIIFEILGVLNSSSRYFHWKLNLCVILLILVFMVPFYIGYFVVSNIRLLHRQKLLFACVLWLTFMYFFWKLGDPFPILSPKHGILSIEQLISRVGVIGVTLMALLSGFGAVNCPYTYMSYFLRNVTDADILALERRLLQTMDMIISKKKRIAVAHRTMFQRGEVHNKPTGFWGMIKSVTTSVAGSENLSLIQQEVDALEELSRQLFLETADLHATKERIEYSKTFQGKYFNFLGYFFSIYCVWKIFMATINIVFDRVGKTDPVTRGIEITVNYLGIQFDVKFWSQHISFILVGIIIVTSIRGLLITLTKFFYAISSSKSSNVIVLLLAQIMGMYFVSSVLLIRMSMPLEYRTIITEVLGELQFNFYHRWFDVIFLVSALSSILFLYLAHKQAPEKHMAL.

2 consecutive transmembrane segments (helical) span residues 5–25 and 46–66; these read IDSSIMVTSQVLFFGFGWLFF and VTFAFSCTMFELIIFEILGVL. Asparagine 67 carries N-linked (GlcNAc...) asparagine glycosylation. 3 consecutive transmembrane segments (helical) span residues 79-99, 111-131, and 150-170; these read LCVILLILVFMVPFYIGYFVV, LFACVLWLTFMYFFWKLGDPF, and VGVIGVTLMALLSGFGAVNCP. N-linked (GlcNAc...) asparagine glycosylation is found at asparagine 180 and asparagine 243. 4 consecutive transmembrane segments (helical) span residues 290-310, 343-363, 378-398, and 425-445; these read GYFFSIYCVWKIFMATINIVF, ISFILVGIIIVTSIRGLLITL, VIVLLLAQIMGMYFVSSVLLI, and WFDVIFLVSALSSILFLYLAH.

It belongs to the Golgi pH regulator (TC 1.A.38) family. As to quaternary structure, homotrimer.

It localises to the golgi apparatus membrane. It carries out the reaction iodide(out) = iodide(in). It catalyses the reaction chloride(in) = chloride(out). The catalysed reaction is bromide(in) = bromide(out). The enzyme catalyses fluoride(in) = fluoride(out). Functionally, voltage-gated channel that enables the transfer of anions such as iodide, chloride, bromide and fluoride which may function in counter-ion conductance and participates in Golgi acidification. In Gallus gallus (Chicken), this protein is Golgi pH regulator.